The primary structure comprises 185 residues: Photosystem I assembly protein Ycf4 (185 aa).

2 helical membrane passes run Asn21 to Tyr43 and Gly63 to Leu85.

It belongs to the Ycf4 family.

It is found in the plastid. The protein localises to the chloroplast thylakoid membrane. In terms of biological role, seems to be required for the assembly of the photosystem I complex. The sequence is that of Photosystem I assembly protein Ycf4 from Aegilops crassa (Persian goatgrass).